Here is a 622-residue protein sequence, read N- to C-terminus: 1-deoxy-D-xylulose-5-phosphate synthase (622 aa).

Thiamine diphosphate contacts are provided by residues His80 and 121–123; that span reads GHS. Position 152 (Asp152) interacts with Mg(2+). Residues 153–154, Asn181, Tyr288, and Glu370 each bind thiamine diphosphate; that span reads GA. Asn181 provides a ligand contact to Mg(2+).

Belongs to the transketolase family. DXPS subfamily. As to quaternary structure, homodimer. It depends on Mg(2+) as a cofactor. Thiamine diphosphate is required as a cofactor.

The enzyme catalyses D-glyceraldehyde 3-phosphate + pyruvate + H(+) = 1-deoxy-D-xylulose 5-phosphate + CO2. The protein operates within metabolic intermediate biosynthesis; 1-deoxy-D-xylulose 5-phosphate biosynthesis; 1-deoxy-D-xylulose 5-phosphate from D-glyceraldehyde 3-phosphate and pyruvate: step 1/1. Its function is as follows. Catalyzes the acyloin condensation reaction between C atoms 2 and 3 of pyruvate and glyceraldehyde 3-phosphate to yield 1-deoxy-D-xylulose-5-phosphate (DXP). In Shewanella denitrificans (strain OS217 / ATCC BAA-1090 / DSM 15013), this protein is 1-deoxy-D-xylulose-5-phosphate synthase.